The chain runs to 43 residues: Peroxidase (43 aa).

This sequence belongs to the peroxidase family. Classical plant (class III) peroxidase subfamily. It depends on Ca(2+) as a cofactor. Requires heme b as cofactor.

The enzyme catalyses 2 a phenolic donor + H2O2 = 2 a phenolic radical donor + 2 H2O. Removal of H(2)O(2), oxidation of toxic reductants, biosynthesis and degradation of lignin, suberization, auxin catabolism, response to environmental stresses such as wounding, pathogen attack and oxidative stress. These functions might be dependent on each isozyme/isoform in each plant tissue. The polypeptide is Peroxidase (Cynara cardunculus var. scolymus (Globe artichoke)).